A 426-amino-acid polypeptide reads, in one-letter code: 3-phosphoshikimate 1-carboxyvinyltransferase (426 aa).

Positions 23, 24, and 28 each coordinate 3-phosphoshikimate. Lys23 contacts phosphoenolpyruvate. Positions 96 and 124 each coordinate phosphoenolpyruvate. The 3-phosphoshikimate site is built by Thr170, Ser171, Gln172, Ser198, Asp314, and Lys341. Residue Gln172 coordinates phosphoenolpyruvate. The active-site Proton acceptor is Asp314. Residues Arg345, Arg386, and Lys411 each contribute to the phosphoenolpyruvate site.

This sequence belongs to the EPSP synthase family. In terms of assembly, monomer.

Its subcellular location is the cytoplasm. The enzyme catalyses 3-phosphoshikimate + phosphoenolpyruvate = 5-O-(1-carboxyvinyl)-3-phosphoshikimate + phosphate. Its pathway is metabolic intermediate biosynthesis; chorismate biosynthesis; chorismate from D-erythrose 4-phosphate and phosphoenolpyruvate: step 6/7. Catalyzes the transfer of the enolpyruvyl moiety of phosphoenolpyruvate (PEP) to the 5-hydroxyl of shikimate-3-phosphate (S3P) to produce enolpyruvyl shikimate-3-phosphate and inorganic phosphate. The protein is 3-phosphoshikimate 1-carboxyvinyltransferase of Nostoc punctiforme (strain ATCC 29133 / PCC 73102).